The following is a 28-amino-acid chain: leu operon leader peptide (28 aa).

In terms of biological role, involved in control of the biosynthesis of leucine. The protein is leu operon leader peptide (leuL) of Shigella flexneri.